We begin with the raw amino-acid sequence, 143 residues long: Transcriptional regulator MraZ (143 aa).

SpoVT-AbrB domains follow at residues Thr-5–Glu-47 and Ala-76–Thr-119.

It belongs to the MraZ family. In terms of assembly, forms oligomers.

It is found in the cytoplasm. It localises to the nucleoid. This chain is Transcriptional regulator MraZ, found in Kineococcus radiotolerans (strain ATCC BAA-149 / DSM 14245 / SRS30216).